The following is a 281-amino-acid chain: Insulin-like growth factor-binding protein 7 (281 aa).

Residues 1-25 (MERPPRALLLGAAGLLLLLLPLSSS) form the signal peptide. Residues 27-113 (SSDACGPCVP…PATLAVCVCK (87 aa)) enclose the IGFBP N-terminal domain. Intrachain disulfides connect Cys31–Cys56, Cys34–Cys58, Cys39–Cys59, Cys47–Cys62, Cys70–Cys86, Cys80–Cys110, Cys112–Cys130, and Cys119–Cys155. The 60-residue stretch at 98–157 (GAAAGGPATLAVCVCKSRYPVCGSNGITYPSGCQLRAASLRAESRGEKAITQVSKGTCEQ) folds into the Kazal-like domain. One can recognise an Ig-like C2-type domain in the interval 159–263 (PSIVTPPKDI…GQASAAAKIT (105 aa)). Asn170 is a glycosylation site (N-linked (GlcNAc...) asparagine). Cys180 and Cys247 are joined by a disulfide. Residue Ser238 is modified to Phosphoserine.

As to quaternary structure, may interact with VPS24/CHMP3; the relevance of such interaction however remains unclear. Interacts with CD93; this interaction plays a role in endothelial cells angiogenesis. Post-translationally, N-glycosylated. Expressed at high levels in lung, kidney, small intestine, testis and uterus and at moderate levels in liver.

It is found in the secreted. Functionally, binds IGF1 and IGF2 with a relatively low affinity. Stimulates prostacyclin (PGI2) production. Stimulates cell adhesion. Acts as a ligand for CD93 to play a role in angiogenesis. This chain is Insulin-like growth factor-binding protein 7 (Igfbp7), found in Mus musculus (Mouse).